Here is a 292-residue protein sequence, read N- to C-terminus: Bifunctional protein FolD 2 (292 aa).

Residues 166–168 (GHS) and isoleucine 232 each bind NADP(+).

It belongs to the tetrahydrofolate dehydrogenase/cyclohydrolase family. In terms of assembly, homodimer.

The enzyme catalyses (6R)-5,10-methylene-5,6,7,8-tetrahydrofolate + NADP(+) = (6R)-5,10-methenyltetrahydrofolate + NADPH. It catalyses the reaction (6R)-5,10-methenyltetrahydrofolate + H2O = (6R)-10-formyltetrahydrofolate + H(+). Its pathway is one-carbon metabolism; tetrahydrofolate interconversion. In terms of biological role, catalyzes the oxidation of 5,10-methylenetetrahydrofolate to 5,10-methenyltetrahydrofolate and then the hydrolysis of 5,10-methenyltetrahydrofolate to 10-formyltetrahydrofolate. The polypeptide is Bifunctional protein FolD 2 (Ruegeria pomeroyi (strain ATCC 700808 / DSM 15171 / DSS-3) (Silicibacter pomeroyi)).